Reading from the N-terminus, the 730-residue chain is Hepatocyte growth factor (730 aa).

The first 31 residues, 1–31 (MWVTKLLPLLVLQQLLLHLLLLPVAVPRAEG), serve as a signal peptide directing secretion. Residue Gln-32 is modified to Pyrrolidone carboxylic acid. Residues 37-123 (NTLHEFKKSA…HEFDLYENKD (87 aa)) form the PAN domain. 8 disulfide bridges follow: Cys-70–Cys-96, Cys-74–Cys-84, Cys-128–Cys-206, Cys-149–Cys-189, Cys-177–Cys-201, Cys-211–Cys-288, Cys-232–Cys-271, and Cys-260–Cys-283. 2 Kringle domains span residues 128–206 (CIIG…IPQC) and 211–288 (CMTC…IKMC). Residue Asn-294 is glycosylated (N-linked (GlcNAc...) asparagine). 11 cysteine pairs are disulfide-bonded: Cys-305–Cys-383, Cys-326–Cys-365, Cys-354–Cys-377, Cys-391–Cys-469, Cys-412–Cys-452, Cys-440–Cys-464, Cys-487–Cys-606, Cys-519–Cys-535, Cys-614–Cys-681, Cys-644–Cys-660, and Cys-671–Cys-699. Kringle domains follow at residues 305 to 383 (CIQG…IPKC) and 391 to 469 (CYRG…IFRC). N-linked (GlcNAc...) asparagine glycosylation is present at Asn-402. A Peptidase S1 domain is found at 495 to 723 (VVNGIPTRTN…YAKWIHKIIL (229 aa)). Residues Asn-568 and Asn-655 are each glycosylated (N-linked (GlcNAc...) asparagine).

The protein belongs to the peptidase S1 family. Plasminogen subfamily. Dimer of an alpha chain and a beta chain linked by a disulfide bond. Interacts with SRPX2; the interaction increases HGF mitogenic activity. The single-chain precursor undergoes proteolytic processing by TMPRSS13 resulting in an active two-chain form. The single-chain precursor undergoes proteolytic processing by HGFAC resulting in an active two-chain form.

Functionally, potent mitogen for mature parenchymal hepatocyte cells, seems to be a hepatotrophic factor, and acts as a growth factor for a broad spectrum of tissues and cell types. Activating ligand for the receptor tyrosine kinase MET by binding to it and promoting its dimerization. Activates MAPK signaling following TMPRSS13 cleavage and activation. The polypeptide is Hepatocyte growth factor (HGF) (Canis lupus familiaris (Dog)).